The following is a 371-amino-acid chain: Jasmonate-induced oxygenase 2 (371 aa).

Residues 219-320 (NIGACLRVNY…RVSLAFFYNP (102 aa)) form the Fe2OG dioxygenase domain. Arg225 lines the jasmonate pocket. Positions 227 and 229 each coordinate 2-oxoglutarate. The Fe cation site is built by His244, Asp246, and His301. The 2-oxoglutarate site is built by Arg311 and Ser313. Jasmonate contacts are provided by Arg350 and Arg354.

Belongs to the iron/ascorbate-dependent oxidoreductase family. The cofactor is L-ascorbate. It depends on Fe(2+) as a cofactor.

It catalyses the reaction jasmonate + 2-oxoglutarate + O2 = (1R,2R)-12-hydroxyjasmonate + succinate + CO2. In terms of biological role, 2-oxoglutarate-dependent dioxygenase involved in the oxidation of jasmonate (JA), a stress-induced phytohormone synthesized in response to attack by pathogens and herbivores, which triggers the activation of defense responses via the JA-mediated signaling pathway. Converts JA to 12-hydroxyjasmonate (12OH-JA), an inactive form of JA. Is specific to free JA, and cannot oxidize the bioactive form jasmonoyl-L-isoleucine (JA-Ile) or other JA-amino acid conjugates. Prevents over-accumulation of JA and indirectly its bioactive form JA-Ile under stress response. Acts as a negative regulator of JA-mediated defense signaling, by contributing to 12OH-JA accumulation, which represses JA defense responses upon infection by the fungal pathogen Botrytis cinerea. Acts as a negative regulator of JA-mediated defense responses upon infestation by the herbivorous caterpillar Mamestra brassicae. May be involved in the catabolism of cytotoxic polycyclic aromatic hydrocarbons (PAHs). In Arabidopsis thaliana (Mouse-ear cress), this protein is Jasmonate-induced oxygenase 2.